Reading from the N-terminus, the 1411-residue chain is ATP-dependent permease PDR11 (1411 aa).

The Cytoplasmic segment spans residues 2–388 (SLSKYFNPIP…IGDRNYLISQ (387 aa)). The ABC transporter 1 domain maps to 31 to 273 (VQNDEESASE…FHDTLQIKKN (243 aa)). The helical transmembrane segment at 389–409 (FVSVVVQSLVIGSLFYNIPLT) threads the bilayer. Residues 410 to 418 (TIGSFSRGS) lie on the Extracellular side of the membrane. The helical transmembrane segment at 419-439 (LTFFSILFFTFLSLADMPASF) threads the bilayer. At 440–471 (QRQPVVRKHVQLHFYYNWVETLATNFFDCCSK) the chain is on the cytoplasmic side. The helical transmembrane segment at 472-492 (FILVVIFTIILYFLAHLQYNA) threads the bilayer. Over 493–494 (AR) the chain is Extracellular. The helical transmembrane segment at 495–515 (FFIFLLFLSVYNFCMVSLFAL) threads the bilayer. Residues 516-524 (TALIAPTLS) are Cytoplasmic-facing. The chain crosses the membrane as a helical span at residues 525-545 (MANLLAGILLLAIAMYASYVI). At 546 to 636 (YMKDMHPWFI…YTYHHVWRNF (91 aa)) the chain is on the extracellular side. Residue N595 is glycosylated (N-linked (GlcNAc...) asparagine). A helical membrane pass occupies residues 637 to 657 (GIIIGFLCFFLFCSLLAAEYI). Topologically, residues 658 to 1090 (TPLFTRENLL…QYICTKRDMT (433 aa)) are cytoplasmic. One can recognise an ABC transporter 2 domain in the interval 751 to 979 (ISWKNINYTI…FVAHDRRLTF (229 aa)). 782 to 789 (GESGAGKT) is an ATP binding site. A helical transmembrane segment spans residues 1091–1111 (YVFAKYALNAGAGLFIGFSFW). At 1112 to 1117 (RTKHNI) the chain is on the extracellular side. A helical membrane pass occupies residues 1118 to 1138 (NGLQDAIFLCFMMLCVSSPLI). The Cytoplasmic segment spans residues 1139-1175 (NQVQDKALQSKEVYIAREARSNTYHWTVLLIAQTIVE). A helical transmembrane segment spans residues 1176–1196 (LPLAISSSTLFFLCCYFCCGF). Residues 1197–1204 (ETSARVAG) are Extracellular-facing. Residues 1205-1225 (VFYLNYILFSMYYLSFGLWLL) traverse the membrane as a helical segment. Over 1226–1230 (YSAPD) the chain is Cytoplasmic. A helical transmembrane segment spans residues 1231–1251 (LQTAAVFVAFLYSFTASFCGV). At 1252–1355 (MQPYSLFPRF…NMSYHHRWRN (104 aa)) the chain is on the extracellular side. N-linked (GlcNAc...) asparagine glycosylation is found at N1289, N1324, and N1346. The chain crosses the membrane as a helical span at residues 1356 to 1376 (FGFEWVFVCFNIAAMFVGFYL). Over 1377–1411 (TYIKKIWPSVIDGIKKCIPSMRRSKTSHNPNEQSV) the chain is Cytoplasmic.

It belongs to the ABC transporter superfamily. ABCG family. PDR (TC 3.A.1.205) subfamily.

The protein localises to the membrane. Its function is as follows. Transporter involved in the uptake of sterol. In Saccharomyces cerevisiae (strain ATCC 204508 / S288c) (Baker's yeast), this protein is ATP-dependent permease PDR11 (PDR11).